The following is a 167-amino-acid chain: Caffeine dehydrogenase subunit gamma (167 aa).

The region spanning 4–80 (HVISLTVNGQ…GHSIRTVEAL (77 aa)) is the 2Fe-2S ferredoxin-type domain. C42, C47, C50, and C62 together coordinate [2Fe-2S] cluster.

In terms of assembly, heterotrimer composed of an alpha (CdhA), a beta (CdhB) and a gamma (CdhC) subunit.

It catalyses the reaction caffeine + a ubiquinone + H2O = 1,3,7-trimethylurate + a ubiquinol. The catalysed reaction is ubiquinone-0 + caffeine + H2O = ubiquinol-0 + 1,3,7-trimethylurate. The enzyme catalyses theobromine + a ubiquinone + H2O = 3,7-dimethylurate + a ubiquinol. Component of the caffeine dehydrogenase complex that catalyzes the hydrolytical oxidation of 1,3,7-trimethylxanthine (caffeine) by incorporation of an oxygen atom originating from a water molecule into position C-8 to produce 1,3,7-trimethyluric acid (TMU). Coenzyme Q0 (ubiquinone-0) is the preferred electron acceptor and, to a lesser extent, coenzyme Q2 (ubiquinone-2) can also be used, but oxygen and NAD(P)(+) cannot. Is involved in a caffeine degradation pathway that allows Pseudomonas sp. strain CBB1 to grow on caffeine as the sole carbon and nitrogen source. Is also active with theobromine as substrate, but shows a very poor activity with theophylline and is not active with xanthine, 3-methylxanthine, 7-methylxanthine, TMU, and 3,7-dimethylurate. This Pseudomonas sp. (strain CBB1) protein is Caffeine dehydrogenase subunit gamma.